The following is an 839-amino-acid chain: Transcription regulator protein BACH2 (839 aa).

A BTB domain is found at 37-103 (CDVTLIVERK…AYTAKLLLSR (67 aa)). Disordered regions lie at residues 150-170 (QRPQ…EETM) and 247-331 (HGTS…LDRS). Residues 161 to 170 (GEEEEEEETM) are compositionally biased toward acidic residues. The segment covering 247 to 263 (HGTSGFASTFSEDSPGN) has biased composition (polar residues). The span at 297–312 (TDIKDRPGDVEMDRKQ) shows a compositional bias: basic and acidic residues. Residue Ser-314 is modified to Phosphoserine. A compositionally biased stretch (low complexity) spans 321–331 (TPTGAACLDRS). Glycyl lysine isopeptide (Lys-Gly) (interchain with G-Cter in SUMO2) cross-links involve residues Lys-381 and Lys-420. At Ser-520 the chain carries Phosphoserine. The tract at residues 582 to 609 (QSYGTNSSDESGSFSEADSESCPVQDRG) is disordered. A compositionally biased stretch (polar residues) spans 583-597 (SYGTNSSDESGSFSE). In terms of domain architecture, bZIP spans 645–708 (FIHDIRRRSK…GELLDNFSCL (64 aa)). Residues 650-666 (RRRSKNRIAAQRCRKRK) form a basic motif region. Positions 670–677 (IQNLECEI) are leucine-zipper. Residues 778–813 (PWVPSNTSENCTSGRRLEGSDPGTFSERGPPLEARS) form a disordered region. Polar residues predominate over residues 781 to 790 (PSNTSENCTS). The Nuclear export signal signature appears at 819–839 (DFCQEMTEKCTTDEQPRKDYA).

It belongs to the bZIP family. CNC subfamily. As to quaternary structure, homodimer; disulfide-linked. Heterodimer of BACH2 and Maf-related transcription factors. The reversible disulfide bond may provide a mechanism to regulate the activity in oxidative stress responses. In terms of processing, phosphorylation at Ser-520 downstream of the PI-3K pathway promotes nuclear export. In terms of tissue distribution, detected in brain and spleen.

Its subcellular location is the cytoplasm. It is found in the nucleus. Its function is as follows. Transcriptional regulator that acts as a repressor or activator. Binds to Maf recognition elements (MARE). Plays an important role in coordinating transcription activation and repression by MAFK. Induces apoptosis in response to oxidative stress through repression of the antiapoptotic factor HMOX1. Positively regulates the nuclear import of actin. Is a key regulator of adaptive immunity, crucial for the maintenance of regulatory T-cell function and B-cell maturation. This chain is Transcription regulator protein BACH2 (Bach2), found in Mus musculus (Mouse).